The primary structure comprises 353 residues: Holliday junction branch migration complex subunit RuvB (353 aa).

Positions 4–190 (HYIRFKIMTN…FGIPMRLNFY (187 aa)) are large ATPase domain (RuvB-L). Residues isoleucine 29, arginine 30, glycine 71, lysine 74, threonine 75, threonine 76, 137–139 (EDF), arginine 180, tyrosine 190, and arginine 227 contribute to the ATP site. Threonine 75 provides a ligand contact to Mg(2+). The tract at residues 191-261 (NTEELKKVLN…ISDFGLNRLE (71 aa)) is small ATPAse domain (RuvB-S). Positions 264–353 (RIGLDSNDYR…HQFNIFNEHE (90 aa)) are head domain (RuvB-H). DNA contacts are provided by arginine 300, arginine 319, and arginine 324.

Belongs to the RuvB family. In terms of assembly, homohexamer. Forms an RuvA(8)-RuvB(12)-Holliday junction (HJ) complex. HJ DNA is sandwiched between 2 RuvA tetramers; dsDNA enters through RuvA and exits via RuvB. An RuvB hexamer assembles on each DNA strand where it exits the tetramer. Each RuvB hexamer is contacted by two RuvA subunits (via domain III) on 2 adjacent RuvB subunits; this complex drives branch migration. In the full resolvosome a probable DNA-RuvA(4)-RuvB(12)-RuvC(2) complex forms which resolves the HJ.

It localises to the cytoplasm. The enzyme catalyses ATP + H2O = ADP + phosphate + H(+). In terms of biological role, the RuvA-RuvB-RuvC complex processes Holliday junction (HJ) DNA during genetic recombination and DNA repair, while the RuvA-RuvB complex plays an important role in the rescue of blocked DNA replication forks via replication fork reversal (RFR). RuvA specifically binds to HJ cruciform DNA, conferring on it an open structure. The RuvB hexamer acts as an ATP-dependent pump, pulling dsDNA into and through the RuvAB complex. RuvB forms 2 homohexamers on either side of HJ DNA bound by 1 or 2 RuvA tetramers; 4 subunits per hexamer contact DNA at a time. Coordinated motions by a converter formed by DNA-disengaged RuvB subunits stimulates ATP hydrolysis and nucleotide exchange. Immobilization of the converter enables RuvB to convert the ATP-contained energy into a lever motion, pulling 2 nucleotides of DNA out of the RuvA tetramer per ATP hydrolyzed, thus driving DNA branch migration. The RuvB motors rotate together with the DNA substrate, which together with the progressing nucleotide cycle form the mechanistic basis for DNA recombination by continuous HJ branch migration. Branch migration allows RuvC to scan DNA until it finds its consensus sequence, where it cleaves and resolves cruciform DNA. The chain is Holliday junction branch migration complex subunit RuvB from Rickettsia massiliae (strain Mtu5).